The chain runs to 297 residues: TATA-box-binding protein (297 aa).

Residues 52 to 116 (EEQQRQQQQA…ITPATPASES (65 aa)) are disordered. Low complexity-rich tracts occupy residues 56-78 (RQQQ…QTPQ) and 104-114 (MTPITPATPAS). Tandem repeats lie at residues 123–199 (LQNI…ARVV) and 213–290 (IQNM…YPIL).

It belongs to the TBP family. In terms of assembly, belongs to the TFIID complex together with the TBP-associated factors (TAFs). Binds DNA as monomer. Post-translationally, the N-terminal domain is extensively phosphorylated.

It is found in the nucleus. Functionally, general transcription factor that functions at the core of the DNA-binding multiprotein factor TFIID. Binding of TFIID to the TATA box is the initial transcriptional step of the pre-initiation complex (PIC), playing a role in the activation of eukaryotic genes transcribed by RNA polymerase II. Members of the TBP family are differentially required to regulate transcription and development during early embryogenesis. Binds to the promoters of select genes. The sequence is that of TATA-box-binding protein from Xenopus tropicalis (Western clawed frog).